The following is a 492-amino-acid chain: Fibroblast growth factor receptor substrate 3 (492 aa).

A lipid anchor (N-myristoyl glycine) is attached at Gly2. An IRS-type PTB domain is found at 13 to 115 (VPHNHPTKFK…QCNSINVTEE (103 aa)). 4 disordered regions span residues 122–230 (SSHP…SDQR), 328–414 (LPPV…PPRQ), 426–454 (GTAR…SSDS), and 469–492 (LQRA…DLPL). Polar residues predominate over residues 371–382 (QKPTSTRASARS).

In terms of assembly, binds NGFR, GRB2, PTPN11 and ERK2. Binds FGFR1 and NTRK1. Post-translationally, phosphorylated on tyrosine residues upon stimulation by BFGF or NGFB. Phosphorylated by ULK2 in vitro.

The protein resides in the membrane. In terms of biological role, adapter protein that links FGF and NGF receptors to downstream signaling pathways. Involved in the activation of MAP kinases. Down-regulates ERK2 signaling by interfering with the phosphorylation and nuclear translocation of ERK2. In Mus musculus (Mouse), this protein is Fibroblast growth factor receptor substrate 3 (Frs3).